Consider the following 197-residue polypeptide: dITP/XTP pyrophosphatase (197 aa).

Residue 8-13 (TGNQGK) participates in substrate binding. The active-site Proton acceptor is aspartate 69. Mg(2+) is bound at residue aspartate 69. Substrate is bound by residues serine 70, 154–157 (FGYD), lysine 177, and 182–183 (HR).

Belongs to the HAM1 NTPase family. Homodimer. The cofactor is Mg(2+).

It carries out the reaction XTP + H2O = XMP + diphosphate + H(+). The catalysed reaction is dITP + H2O = dIMP + diphosphate + H(+). The enzyme catalyses ITP + H2O = IMP + diphosphate + H(+). Functionally, pyrophosphatase that catalyzes the hydrolysis of nucleoside triphosphates to their monophosphate derivatives, with a high preference for the non-canonical purine nucleotides XTP (xanthosine triphosphate), dITP (deoxyinosine triphosphate) and ITP. Seems to function as a house-cleaning enzyme that removes non-canonical purine nucleotides from the nucleotide pool, thus preventing their incorporation into DNA/RNA and avoiding chromosomal lesions. This is dITP/XTP pyrophosphatase from Photobacterium profundum (strain SS9).